Reading from the N-terminus, the 166-residue chain is Large ribosomal subunit protein uL10 (166 aa).

This sequence belongs to the universal ribosomal protein uL10 family. Part of the ribosomal stalk of the 50S ribosomal subunit. The N-terminus interacts with L11 and the large rRNA to form the base of the stalk. The C-terminus forms an elongated spine to which L12 dimers bind in a sequential fashion forming a multimeric L10(L12)X complex.

Forms part of the ribosomal stalk, playing a central role in the interaction of the ribosome with GTP-bound translation factors. In Bacillus cereus (strain 03BB102), this protein is Large ribosomal subunit protein uL10.